We begin with the raw amino-acid sequence, 180 residues long: Putative 3-methyladenine DNA glycosylase (180 aa).

This sequence belongs to the DNA glycosylase MPG family.

This Wolbachia pipientis wMel protein is Putative 3-methyladenine DNA glycosylase.